A 492-amino-acid chain; its full sequence is 3,6-anhydro-alpha-L-galactose dehydrogenase (492 aa).

NADP(+) is bound by residues W160–N161, K184–E187, and G237–S238. E259 (proton acceptor) is an active-site residue. Residue L260 participates in NADP(+) binding. Catalysis depends on C293, which acts as the Nucleophile. Position 394 (E394) interacts with NADP(+).

This sequence belongs to the aldehyde dehydrogenase family.

The enzyme catalyses 3,6-anhydro-alpha-L-galactopyranose + NADP(+) + H2O = 3,6-anhydro-L-galactonate + NADPH + 2 H(+). Its activity is regulated as follows. Significantly inhibited by EDTA. Activity is enhanced by Fe(2+), but is strongly inhibited by Mn(2+), Cu(2+), Zn(2+), Ni(2+) and Co(2+). In terms of biological role, involved in the degradation of 3,6-anhydro-L-galactose, which is the major monomeric sugar of red macroalgae. Catalyzes the oxidation of 3,6-anhydro-L-galactose (AHG) to form 3,6-anhydrogalactonate (AHGA). Shows broad substrate specificity, with maximum activity toward AHG. The enzyme activities toward D-fructose, D-galactose and D-ribose are between 40% and 50% of the maximum, but those toward L-rhamnose, L-glyceraldehyde, D-glyceraldehyde, L-fucose and D-glucose are much lower. This is 3,6-anhydro-alpha-L-galactose dehydrogenase from Streptomyces coelicolor (strain ATCC BAA-471 / A3(2) / M145).